The sequence spans 366 residues: MKIADLMTLLDHHVPFSTAESWDNVGLLIGDEDVEVTGVLTALDCTLEVVNEAIEKGYNTIISHHPLIFKGVTSLKANGYGLIIRKLIQHDINLIAMHTNLDVNPYGVNMMLAKAMGLKNISIINNQQDVYYKVQTYIPKDNVGPFKDKLSENGLAQEGNYEYCFFESEGRGQFKPVGEANPTIGQIDKIEYVDEVKIEFMIDAYQKSRAEQLIKQYHPYETPVFDFIEIKQTSLYGLGVMAEVDNQMTLEDFAADIKSKLNIPSVRFVGESNQKIKRIAIIGGSGIGYEYQAVQQGADVFVTGDIKHHDALDAKIHGVNLIDINHYSEYVMKEGLKTLLMNRFNTEKINIDVEASTINTDPFQYI.

Histidine 64, histidine 65, aspartate 102, histidine 326, and glutamate 329 together coordinate Zn(2+).

Belongs to the GTP cyclohydrolase I type 2/NIF3 family. Homohexamer.

This is GTP cyclohydrolase 1 type 2 homolog from Staphylococcus aureus (strain MSSA476).